The chain runs to 223 residues: Alpha-S2-casein (223 aa).

The first 15 residues, 1 to 15, serve as a signal peptide directing secretion; it reads MKFFIFTCLLAVALA. Serine 23, serine 24, serine 25, serine 72, serine 73, serine 74, serine 77, serine 145, serine 147, serine 151, and serine 159 each carry phosphoserine. A repeat spans 77-141; that stretch reads SAEVAPEEVK…AGPFTPTVNR (65 aa). A repeat spans 159 to 223; sequence STEVFTKKTK…TNAIPYVRYL (65 aa).

The protein belongs to the alpha-casein family. In terms of tissue distribution, mammary gland specific. Secreted in milk.

The protein localises to the secreted. Important role in the capacity of milk to transport calcium phosphate. This is Alpha-S2-casein (CSN1S2) from Ovis aries (Sheep).